A 678-amino-acid chain; its full sequence is Secretin ExeD (678 aa).

The N-terminal stretch at 1–25 (MINKGKGWRLATVAAALMMAGSAWA) is a signal peptide. Residues 26–122 (TEYSASFKNA…VVDETNPGIG (97 aa)) form an N0 region. The tract at residues 124–188 (EMVTRVVPVR…EVVRRVDKAG (65 aa)) is N1. Residues 189-264 (DQEVDIIKLK…MVRQLDRDLQ (76 aa)) are N2. Residues 267–348 (GNTRVFYLKY…ELEQVVAKLD (82 aa)) are N3. Positions 353–602 (QVLVEAIIVE…VFIRPTILRD (250 aa)) are secretin. Residues 604–678 (NVYSGISSNK…GVQPFVQGNK (75 aa)) are s domain.

Belongs to the bacterial secretin family. GSP D subfamily. Forms a cylindrical channel with 15 subunits.

Its subcellular location is the cell outer membrane. Involved in a type II secretion system (T2SS, formerly general secretion pathway, GSP) for the export of proteins. This subunit forms the outer membrane channel. This Aeromonas hydrophila protein is Secretin ExeD (exeD).